The sequence spans 265 residues: Hydroxyethylthiazole kinase (265 aa).

Residue methionine 43 coordinates substrate. 2 residues coordinate ATP: lysine 118 and threonine 165. Residue glycine 192 coordinates substrate.

It belongs to the Thz kinase family. The cofactor is Mg(2+).

The enzyme catalyses 5-(2-hydroxyethyl)-4-methylthiazole + ATP = 4-methyl-5-(2-phosphooxyethyl)-thiazole + ADP + H(+). It functions in the pathway cofactor biosynthesis; thiamine diphosphate biosynthesis; 4-methyl-5-(2-phosphoethyl)-thiazole from 5-(2-hydroxyethyl)-4-methylthiazole: step 1/1. Functionally, catalyzes the phosphorylation of the hydroxyl group of 4-methyl-5-beta-hydroxyethylthiazole (THZ). The chain is Hydroxyethylthiazole kinase from Pyrococcus furiosus (strain ATCC 43587 / DSM 3638 / JCM 8422 / Vc1).